The chain runs to 417 residues: NADH-quinone oxidoreductase subunit D (417 aa).

This sequence belongs to the complex I 49 kDa subunit family. As to quaternary structure, NDH-1 is composed of 14 different subunits. Subunits NuoB, C, D, E, F, and G constitute the peripheral sector of the complex.

It is found in the cell inner membrane. It catalyses the reaction a quinone + NADH + 5 H(+)(in) = a quinol + NAD(+) + 4 H(+)(out). Functionally, NDH-1 shuttles electrons from NADH, via FMN and iron-sulfur (Fe-S) centers, to quinones in the respiratory chain. The immediate electron acceptor for the enzyme in this species is believed to be ubiquinone. Couples the redox reaction to proton translocation (for every two electrons transferred, four hydrogen ions are translocated across the cytoplasmic membrane), and thus conserves the redox energy in a proton gradient. This chain is NADH-quinone oxidoreductase subunit D, found in Burkholderia mallei (strain NCTC 10247).